A 449-amino-acid polypeptide reads, in one-letter code: Glucose-6-phosphate isomerase (449 aa).

Glu290 (proton donor) is an active-site residue. Active-site residues include His311 and Lys425.

It belongs to the GPI family.

The protein resides in the cytoplasm. It catalyses the reaction alpha-D-glucose 6-phosphate = beta-D-fructose 6-phosphate. It participates in carbohydrate biosynthesis; gluconeogenesis. The protein operates within carbohydrate degradation; glycolysis; D-glyceraldehyde 3-phosphate and glycerone phosphate from D-glucose: step 2/4. Functionally, catalyzes the reversible isomerization of glucose-6-phosphate to fructose-6-phosphate. The polypeptide is Glucose-6-phosphate isomerase (Clostridium tetani (strain Massachusetts / E88)).